Consider the following 329-residue polypeptide: G-protein coupled receptor 3 (329 aa).

The Extracellular portion of the chain corresponds to methionine 1–aspartate 43. A glycan (N-linked (GlcNAc...) asparagine) is linked at asparagine 20. A helical transmembrane segment spans residues valine 44 to isoleucine 64. The Cytoplasmic segment spans residues valine 65–proline 73. Residues methionine 74–leucine 94 form a helical membrane-spanning segment. Topologically, residues histidine 95–serine 108 are extracellular. Residues leucine 109–isoleucine 129 form a helical membrane-spanning segment. Residues threonine 130 to tyrosine 153 lie on the Cytoplasmic side of the membrane. Residues valine 154–tryptophan 174 traverse the membrane as a helical segment. Topologically, residues asparagine 175 to asparagine 192 are extracellular. The helical transmembrane segment at histidine 193 to alanine 213 threads the bilayer. Over glutamine 214–threonine 247 the chain is Cytoplasmic. A helical transmembrane segment spans residues leucine 248–leucine 268. The Extracellular portion of the chain corresponds to glycine 269–tyrosine 277. The helical transmembrane segment at threonine 278–phenylalanine 298 threads the bilayer. The Cytoplasmic portion of the chain corresponds to arginine 299–valine 329. The S-palmitoyl cysteine moiety is linked to residue cysteine 312. A phosphoserine mark is found at serine 323, serine 325, and serine 327.

Belongs to the G-protein coupled receptor 1 family. Abundantly expressed in granule neurons at all development stages. Enriched in the longest tips of neurites during differentiation of hippocampal neurons.

The protein resides in the cell membrane. Functionally, constitutively active G-protein coupled receptor that maintains high 3'-5'-cyclic adenosine monophosphate (cAMP) levels that a plays a role in serveral processes including meiotic arrest in oocytes or neuronal development via activation of numerous intracellular signaling pathways. Acts as an essential activator of thermogenic adipocytes and drives thermogenesis via its intrinsic G(s)-coupling activity without the requirement of a ligand. Has a potential role in modulating a number of brain functions, including behavioral responses to stress, amyloid-beta peptide generation in neurons. Stimulates neurite outgrowth in cerebellar granular neurons modulated via PKA, ERK, and most strongly PI3K-mediated signaling pathways. The protein is G-protein coupled receptor 3 (Gpr3) of Rattus norvegicus (Rat).